Consider the following 208-residue polypeptide: Large ribosomal subunit protein bL17 (208 aa).

Residues 122–208 are disordered; the sequence is TEKKKKKPAK…ASEEAPPKTE (87 aa). Over residues 151–179 the composition is skewed to low complexity; that stretch reads ADTPAPAAEESAPAKAAEPEAEAAAPEAE.

It belongs to the bacterial ribosomal protein bL17 family. In terms of assembly, part of the 50S ribosomal subunit. Contacts protein L32.

The chain is Large ribosomal subunit protein bL17 from Desulfosudis oleivorans (strain DSM 6200 / JCM 39069 / Hxd3) (Desulfococcus oleovorans).